Reading from the N-terminus, the 488-residue chain is Bifunctional protein GlmU (488 aa).

The tract at residues 1 to 237 (MPRTRTPLAA…AEEASGVNDR (237 aa)) is pyrophosphorylase. Residues 13–16 (LAAG), Lys27, Gln82, 87–88 (GT), 110–112 (SGD), Gly149, Glu164, Asn179, and Asn235 contribute to the UDP-N-acetyl-alpha-D-glucosamine site. Position 112 (Asp112) interacts with Mg(2+). Residue Asn235 participates in Mg(2+) binding. The segment at 238–258 (IELARANRVMVGRLAEAFMRA) is linker. The N-acetyltransferase stretch occupies residues 259-488 (GVTIEDPARF…KGRPAARRAS (230 aa)). Positions 341 and 359 each coordinate UDP-N-acetyl-alpha-D-glucosamine. His371 functions as the Proton acceptor in the catalytic mechanism. 2 residues coordinate UDP-N-acetyl-alpha-D-glucosamine: Tyr374 and Asn385. Acetyl-CoA contacts are provided by residues Ala388, 394–395 (NY), Ser413, Ala431, and Arg448. Residues 459–488 (AQRQAEKQMKGTATGPAPARKGRPAARRAS) form a disordered region. The span at 478-488 (RKGRPAARRAS) shows a compositional bias: basic residues.

It in the N-terminal section; belongs to the N-acetylglucosamine-1-phosphate uridyltransferase family. In the C-terminal section; belongs to the transferase hexapeptide repeat family. In terms of assembly, homotrimer. Mg(2+) is required as a cofactor.

Its subcellular location is the cytoplasm. It catalyses the reaction alpha-D-glucosamine 1-phosphate + acetyl-CoA = N-acetyl-alpha-D-glucosamine 1-phosphate + CoA + H(+). The catalysed reaction is N-acetyl-alpha-D-glucosamine 1-phosphate + UTP + H(+) = UDP-N-acetyl-alpha-D-glucosamine + diphosphate. It functions in the pathway nucleotide-sugar biosynthesis; UDP-N-acetyl-alpha-D-glucosamine biosynthesis; N-acetyl-alpha-D-glucosamine 1-phosphate from alpha-D-glucosamine 6-phosphate (route II): step 2/2. Its pathway is nucleotide-sugar biosynthesis; UDP-N-acetyl-alpha-D-glucosamine biosynthesis; UDP-N-acetyl-alpha-D-glucosamine from N-acetyl-alpha-D-glucosamine 1-phosphate: step 1/1. It participates in bacterial outer membrane biogenesis; LPS lipid A biosynthesis. Catalyzes the last two sequential reactions in the de novo biosynthetic pathway for UDP-N-acetylglucosamine (UDP-GlcNAc). The C-terminal domain catalyzes the transfer of acetyl group from acetyl coenzyme A to glucosamine-1-phosphate (GlcN-1-P) to produce N-acetylglucosamine-1-phosphate (GlcNAc-1-P), which is converted into UDP-GlcNAc by the transfer of uridine 5-monophosphate (from uridine 5-triphosphate), a reaction catalyzed by the N-terminal domain. The sequence is that of Bifunctional protein GlmU from Anaeromyxobacter dehalogenans (strain 2CP-C).